A 153-amino-acid polypeptide reads, in one-letter code: Ribosome maturation factor RimP (153 aa).

It belongs to the RimP family.

The protein resides in the cytoplasm. Functionally, required for maturation of 30S ribosomal subunits. The protein is Ribosome maturation factor RimP of Psychromonas ingrahamii (strain DSM 17664 / CCUG 51855 / 37).